Reading from the N-terminus, the 715-residue chain is Putative membrane protein IgaA homolog (715 aa).

5 helical membrane-spanning segments follow: residues 2 to 22 (STIV…GLLW), 214 to 234 (EACA…GPTV), 235 to 255 (TLPW…WYLF), 349 to 369 (NLTL…YVPL), and 663 to 683 (ATSL…VLLI).

This sequence belongs to the IgaA family.

The protein resides in the cell inner membrane. The polypeptide is Putative membrane protein IgaA homolog (Yersinia pestis).